Consider the following 512-residue polypeptide: MSQTEEKKGIGRRVQAFGSFLSSMIMPNIGAFIAWGFIAAIFIDNGWFPNKDLATLAGPMITYLIPLLIAFSGGRLIYDLRGGIIAATATMGVIVALPDTPMLLGAMIMGPLVGWLMKKTDQLIQPRTPQGFEMLFNNFSAGILGFIMTIAGFKILAPLMKFIMHILSVAVEALVHAHLLPLVSILVEPAKIVFLNNAINHGVFTPLGADQAAKAGQSILYTIESNPGPGLGILLAYMIFGKGTAKATSYGAGIIHFFGGIHEIYFPYVLMRPLLFIAVILGGMTGVATYQATGFGFKSPASPGSFIVYCLNAPRGEFLHMLLGVFLATLVSFVVAALIMKFTKEPKQDLEAATAQMETTKGKKSSVASKLVSSDKNVNTEENASGNVSETSSLDDDPEALLDNYNTEDVDAHNYNNINHVIFACDAGMGSSAMGASMLRNKFKKAGINDITVTNTAINQLPKDAQLVITQKKLTDRAIKQTPNAIHISVDNFLNSPRYEELLNNLKKDDQA.

The Cytoplasmic portion of the chain corresponds to 1–28 (MSQTEEKKGIGRRVQAFGSFLSSMIMPN). The PTS EIIC type-2 domain occupies 17–349 (FGSFLSSMIM…MKFTKEPKQD (333 aa)). Residues 29-50 (IGAFIAWGFIAAIFIDNGWFPN) traverse the membrane as a helical segment. Over 51-54 (KDLA) the chain is Extracellular. A helical membrane pass occupies residues 55 to 75 (TLAGPMITYLIPLLIAFSGGR). Over 76-139 (LIYDLRGGII…QGFEMLFNNF (64 aa)) the chain is Cytoplasmic. Residues 140-161 (SAGILGFIMTIAGFKILAPLMK) traverse the membrane as a helical segment. Topologically, residues 162-170 (FIMHILSVA) are extracellular. The helical transmembrane segment at 171–191 (VEALVHAHLLPLVSILVEPAK) threads the bilayer. Residues 192–278 (IVFLNNAINH…VLMRPLLFIA (87 aa)) are Cytoplasmic-facing. A helical membrane pass occupies residues 279–298 (VILGGMTGVATYQATGFGFK). Residues 299–318 (SPASPGSFIVYCLNAPRGEF) lie on the Extracellular side of the membrane. The chain crosses the membrane as a helical span at residues 319 to 340 (LHMLLGVFLATLVSFVVAALIM). The Cytoplasmic segment spans residues 341–512 (KFTKEPKQDL…LNNLKKDDQA (172 aa)). Residues 365-376 (SSVASKLVSSDK) show a composition bias toward low complexity. The segment at 365–401 (SSVASKLVSSDKNVNTEENASGNVSETSSLDDDPEAL) is disordered. The span at 380-392 (TEENASGNVSETS) shows a compositional bias: polar residues. Residues 419–512 (NHVIFACDAG…LNNLKKDDQA (94 aa)) form the PTS EIIB type-2 domain. Catalysis depends on Cys425, which acts as the Phosphocysteine intermediate; for EIIB activity. Phosphocysteine; by EIIA is present on Cys425.

As to quaternary structure, homodimer.

The protein resides in the cell membrane. It catalyses the reaction D-mannitol(out) + N(pros)-phospho-L-histidyl-[protein] = D-mannitol 1-phosphate(in) + L-histidyl-[protein]. In terms of biological role, the phosphoenolpyruvate-dependent sugar phosphotransferase system (sugar PTS), a major carbohydrate active transport system, catalyzes the phosphorylation of incoming sugar substrates concomitantly with their translocation across the cell membrane. The enzyme II CmtAB PTS system is involved in D-mannitol transport. The polypeptide is PTS system mannitol-specific EIICB component (mtlA) (Staphylococcus aureus (strain MRSA252)).